Here is a 336-residue protein sequence, read N- to C-terminus: Probable long-chain-alcohol O-fatty-acyltransferase 8 (336 aa).

The next 8 membrane-spanning stretches (helical) occupy residues 7 to 27, 38 to 58, 59 to 79, 82 to 102, 117 to 135, 152 to 172, 228 to 248, and 284 to 304; these read SFVKVWGSAIISVSYCYYIPS, SVLPVCVLFLVLPLFFVFTIF, SSTTAFCLSILANFKLILFAF, GPLLPLPANLFRFICFTCLPI, WVFFCKAAIFGVLLNVHNY, LYLVLDVLLTIVNALLTIILG, MGCWTTFFVSGLIHELVYFYI, and PMLSRLITVGFLVVTGYFLFF.

Belongs to the wax synthase family.

The protein resides in the membrane. It catalyses the reaction a long chain fatty alcohol + a fatty acyl-CoA = a wax ester + CoA. Its function is as follows. Catalyzes the final step in the synthesis of long-chain linear esters (waxes). The sequence is that of Probable long-chain-alcohol O-fatty-acyltransferase 8 from Arabidopsis thaliana (Mouse-ear cress).